The primary structure comprises 301 residues: Haloalkane dehalogenase (301 aa).

The AB hydrolase-1 domain maps to 47–284 (PPIVLLHGEP…INASHFIQED (238 aa)). D123 serves as the catalytic Nucleophile. The active-site Proton donor is the D250. H279 functions as the Proton acceptor in the catalytic mechanism.

It belongs to the haloalkane dehalogenase family. Type 1 subfamily. As to quaternary structure, monomer.

It catalyses the reaction 1-haloalkane + H2O = a halide anion + a primary alcohol + H(+). Functionally, catalyzes hydrolytic cleavage of carbon-halogen bonds in halogenated aliphatic compounds, leading to the formation of the corresponding primary alcohols, halide ions and protons. The sequence is that of Haloalkane dehalogenase from Mycolicibacterium paratuberculosis (strain ATCC BAA-968 / K-10) (Mycobacterium paratuberculosis).